A 119-amino-acid chain; its full sequence is Holo-[acyl-carrier-protein] synthase (119 aa).

Aspartate 7 and glutamate 53 together coordinate Mg(2+).

It belongs to the P-Pant transferase superfamily. AcpS family. It depends on Mg(2+) as a cofactor.

It localises to the cytoplasm. The enzyme catalyses apo-[ACP] + CoA = holo-[ACP] + adenosine 3',5'-bisphosphate + H(+). Functionally, transfers the 4'-phosphopantetheine moiety from coenzyme A to a Ser of acyl-carrier-protein. The sequence is that of Holo-[acyl-carrier-protein] synthase from Dehalococcoides mccartyi (strain CBDB1).